Here is a 1031-residue protein sequence, read N- to C-terminus: Error-prone DNA polymerase (1031 aa).

This sequence belongs to the DNA polymerase type-C family. DnaE2 subfamily.

The protein localises to the cytoplasm. It carries out the reaction DNA(n) + a 2'-deoxyribonucleoside 5'-triphosphate = DNA(n+1) + diphosphate. Its function is as follows. DNA polymerase involved in damage-induced mutagenesis and translesion synthesis (TLS). It is not the major replicative DNA polymerase. This Pseudomonas syringae pv. tomato (strain ATCC BAA-871 / DC3000) protein is Error-prone DNA polymerase.